Consider the following 352-residue polypeptide: WAT1-related protein At1g11450 (352 aa).

10 helical membrane passes run 14–34 (WPPM…NALV), 46–66 (IIGA…AYFL), 83–103 (FISG…GLSY), 107–127 (TVAC…ALIL), 139–159 (AGMI…FLTF), 187–207 (WLLG…WILF), 219–239 (FSST…LSLY), 253–273 (FVIG…TVAA), 283–303 (VFAS…DFLI), and 308–328 (LYLG…VFLW). EamA domains lie at 27–157 (MGSV…ALFL) and 192–335 (LYLV…KETE).

Belongs to the drug/metabolite transporter (DMT) superfamily. Plant drug/metabolite exporter (P-DME) (TC 2.A.7.4) family.

It is found in the membrane. The sequence is that of WAT1-related protein At1g11450 from Arabidopsis thaliana (Mouse-ear cress).